A 311-amino-acid polypeptide reads, in one-letter code: Apulose-4-phosphate transketolase subunit B (311 aa).

Belongs to the transketolase family. Probable heterodimer composed of AptA and AptB. Thiamine diphosphate serves as cofactor.

The enzyme catalyses apulose 4-phosphate + D-glyceraldehyde 3-phosphate = D-xylulose 5-phosphate + dihydroxyacetone phosphate. It participates in carbohydrate metabolism. In terms of biological role, involved in catabolism of D-apiose. Catalyzes the transfer of the glycolaldehyde group from apulose-4-phosphate to D-glyceraldehyde 3-phosphate, generating dihydroxyacetone phosphate and D-xylulose-5-phosphate. This is Apulose-4-phosphate transketolase subunit B from Actinobacillus succinogenes (strain ATCC 55618 / DSM 22257 / CCUG 43843 / 130Z).